The sequence spans 459 residues: Cysteine--tRNA ligase (459 aa).

A Zn(2+)-binding site is contributed by cysteine 28. Residues 30–40 (ITIYDLCHIGH) carry the 'HIGH' region motif. Cysteine 209, histidine 234, and glutamate 238 together coordinate Zn(2+). The 'KMSKS' region signature appears at 266 to 270 (KMSKS). Lysine 269 provides a ligand contact to ATP.

Belongs to the class-I aminoacyl-tRNA synthetase family. In terms of assembly, monomer. The cofactor is Zn(2+).

It is found in the cytoplasm. It carries out the reaction tRNA(Cys) + L-cysteine + ATP = L-cysteinyl-tRNA(Cys) + AMP + diphosphate. The sequence is that of Cysteine--tRNA ligase from Shewanella woodyi (strain ATCC 51908 / MS32).